The sequence spans 142 residues: Protein KNATM (142 aa).

Residues 4-36 are a coiled coil; sequence KKDENSILENMKQEINHSLKEEAQEEEEILKKR.

In terms of assembly, interacts with KNAT1, KNAT3, KNAT4, BEL1, BLH2, BLH4 and BLH9, but not with BLH8 or the KNATM-A and KNATM-C isoforms. Isoforms KNATM-A and KNATM-C: no interactions with KNATM-B, KNOXX or BELL proteins. Detected in inflorescences, seedlings, leaves, hydathodes, stems, roots, embryo and siliques. Expressed in a polar pattern in organ primordia and at the boundary of mature organs. Detected in the lateral domains of flower meristems, but not in the inflorescence meristem or the vegetative shoot apical meristem.

Its subcellular location is the cytoplasm. It is found in the nucleus. Transcriptional regulator involved in leaf proximal/distal patterning. May act by sequestering BELL transcription factors. The protein is Protein KNATM of Arabidopsis thaliana (Mouse-ear cress).